Consider the following 401-residue polypeptide: Sulfate adenylyltransferase (401 aa).

Belongs to the sulfate adenylyltransferase family.

It carries out the reaction sulfate + ATP + H(+) = adenosine 5'-phosphosulfate + diphosphate. Its pathway is sulfur metabolism; hydrogen sulfide biosynthesis; sulfite from sulfate: step 1/3. This chain is Sulfate adenylyltransferase, found in Alcanivorax borkumensis (strain ATCC 700651 / DSM 11573 / NCIMB 13689 / SK2).